The sequence spans 246 residues: MSQVTMRDMLKAGCHFGHQTRYWNPKMGRYIFGARNKIHIINLEKTLPMFNEALSFVEKLAAGKNKILFVGTKRSAGRLVREEAARCSMPYVDHRWLGGMLTNYKTIRASIKRLRELETQSQDGTFAKLTKKEALMRTRDLEKLERSLGGIKDMGGLPDAMFVIDVDHERIAISEANKLGIPVIGVVDTNSSPEGVDYIIPGNDDAIRAVQLYLGSVADAVLRGRQNAGTGDEFIEEVAASEAAEG.

It belongs to the universal ribosomal protein uS2 family.

In Azotobacter vinelandii (strain DJ / ATCC BAA-1303), this protein is Small ribosomal subunit protein uS2.